The primary structure comprises 487 residues: Serine/threonine-protein kinase 4 (487 aa).

M1 carries the post-translational modification N-acetylmethionine. Residue T3 is modified to Phosphothreonine. A Protein kinase domain is found at 30 to 281; that stretch reads FDVLEKLGEG…ATQLLQHPFV (252 aa). Residues 36 to 44 and K59 each bind ATP; that span reads LGEGSYGSV. D149 acts as the Proton acceptor in catalysis. Residue T183 is modified to Phosphothreonine; by autocatalysis. 2 positions are modified to phosphoserine: S265 and S320. The stretch at 289-327 forms a coiled coil; it reads ILRDLINEAMDVKLKRQEAQQREVDQEEEENSEEDELDS. The disordered stretch occupies residues 305-332; sequence QEAQQREVDQEEEENSEEDELDSGTMVR. A compositionally biased stretch (acidic residues) spans 313–326; that stretch reads DQEEEENSEEDELD. T340 and T367 each carry phosphothreonine. Residue T387 is modified to Phosphothreonine; by PKB/AKT1. Residues S410 and S414 each carry the phosphoserine modification. The residue at position 433 (Y433) is a Phosphotyrosine. Residues 433 to 480 form the SARAH domain; sequence YEFLKSWTVEDLQKRLLALDPMMEQEIEEIRQKYQSKRQPILDAIEAK.

It belongs to the protein kinase superfamily. STE Ser/Thr protein kinase family. STE20 subfamily. As to quaternary structure, homodimer; mediated via the coiled-coil region. Interacts with NORE1, which inhibits autoactivation. Interacts with and stabilizes SAV1. Interacts with RASSF1. Interacts with FOXO3. Interacts with RASSF2 (via SARAH domain). Interacts with AR, PKB/AKT1, TNNI3 and SIRT1. Interacts with DLG5 (via PDZ domain 3). Interacts with MARK3 and SCRIB in the presence of DLG5. Requires Mg(2+) as cofactor. Autophosphorylated on serine and threonine residues. Phosphorylation at Thr-387 by PKB/AKT1, leads to inhibition of its: kinase activity, nuclear translocation and autophosphorylation at Thr-183. It also diminishes its cleavage by caspases and its ability to phosphorylate FOXO3. In terms of processing, proteolytically cleaved by caspase-3 during apoptosis at Asp-326 and Asp-349 resulting in a 37 kDa or a 39 kDa subunit respectively. The 39 kDa subunit is further cleaved into the 37 kDa form. Proteolytic cleavage results in kinase activation and nuclear translocation of the truncated form (MST1/N). It is less likely that cleavage at Asp-349 is a prerequisite for activation as this site is not conserved in the murine ortholog.

The protein localises to the cytoplasm. It localises to the nucleus. The catalysed reaction is L-seryl-[protein] + ATP = O-phospho-L-seryl-[protein] + ADP + H(+). It catalyses the reaction L-threonyl-[protein] + ATP = O-phospho-L-threonyl-[protein] + ADP + H(+). Its activity is regulated as follows. Inhibited by the C-terminal non-catalytic region. Activated by caspase-cleavage. Full activation also requires homodimerization and autophosphorylation of Thr-183. Activated by RASSF1 which acts by preventing its dephosphorylation. Functionally, stress-activated, pro-apoptotic kinase which, following caspase-cleavage, enters the nucleus and induces chromatin condensation followed by internucleosomal DNA fragmentation. Key component of the Hippo signaling pathway which plays a pivotal role in organ size control and tumor suppression by restricting proliferation and promoting apoptosis. The core of this pathway is composed of a kinase cascade wherein STK3/MST2 and STK4/MST1, in complex with its regulatory protein SAV1, phosphorylates and activates LATS1/2 in complex with its regulatory protein MOB1, which in turn phosphorylates and inactivates YAP1 oncoprotein and WWTR1/TAZ. Phosphorylation of YAP1 by LATS2 inhibits its translocation into the nucleus to regulate cellular genes important for cell proliferation, cell death, and cell migration. STK3/MST2 and STK4/MST1 are required to repress proliferation of mature hepatocytes, to prevent activation of facultative adult liver stem cells (oval cells), and to inhibit tumor formation. Phosphorylates 'Ser-14' of histone H2B (H2BS14ph) during apoptosis. Phosphorylates FOXO3 upon oxidative stress, which results in its nuclear translocation and cell death initiation. Phosphorylates MOBKL1A, MOBKL1B and RASSF2. Phosphorylates TNNI3 (cardiac Tn-I) and alters its binding affinity to TNNC1 (cardiac Tn-C) and TNNT2 (cardiac Tn-T). Phosphorylates FOXO1 on 'Ser-212' and regulates its activation and stimulates transcription of PMAIP1 in a FOXO1-dependent manner. Phosphorylates SIRT1 and inhibits SIRT1-mediated p53/TP53 deacetylation, thereby promoting p53/TP53 dependent transcription and apoptosis upon DNA damage. Acts as an inhibitor of PKB/AKT1. Phosphorylates AR on 'Ser-650' and suppresses its activity by intersecting with PKB/AKT1 signaling and antagonizing formation of AR-chromatin complexes. In Bos taurus (Bovine), this protein is Serine/threonine-protein kinase 4 (STK4).